The sequence spans 227 residues: UPF0758 protein Pcar_0065 (227 aa).

In terms of domain architecture, MPN spans 105 to 227 (RYTSPQAVFA…YVSLADRGVL (123 aa)). Residues histidine 176, histidine 178, and aspartate 189 each coordinate Zn(2+). Residues 176-189 (HNHPSGDPSPSRED) carry the JAMM motif motif.

This sequence belongs to the UPF0758 family.

This Syntrophotalea carbinolica (strain DSM 2380 / NBRC 103641 / GraBd1) (Pelobacter carbinolicus) protein is UPF0758 protein Pcar_0065.